Consider the following 295-residue polypeptide: NAD kinase (295 aa).

The active-site Proton acceptor is the D72. Residues D72–G73, N146–D147, R157, K174, D176, T187–S192, and Q247 contribute to the NAD(+) site.

It belongs to the NAD kinase family. Requires a divalent metal cation as cofactor.

Its subcellular location is the cytoplasm. It carries out the reaction NAD(+) + ATP = ADP + NADP(+) + H(+). Functionally, involved in the regulation of the intracellular balance of NAD and NADP, and is a key enzyme in the biosynthesis of NADP. Catalyzes specifically the phosphorylation on 2'-hydroxyl of the adenosine moiety of NAD to yield NADP. The polypeptide is NAD kinase (Pseudomonas aeruginosa (strain LESB58)).